A 149-amino-acid polypeptide reads, in one-letter code: MFGLKVKNAEADTAKSNEKLQGAEATGSSTTSGSGQSTQRGGSSGDTKVKALQVAVKKKSGSQGNSGDQGTEQVELESNDLANAPIKRGSNPASPTQGSRLRHHPIQFGIWSIRHPHPLKAVACDRANSQGPPQMIRLDPHSVRCALCL.

Residues 1-103 (MFGLKVKNAE…SPTQGSRLRH (103 aa)) are disordered. Positions 7 to 18 (KNAEADTAKSNE) are enriched in basic and acidic residues. The span at 26 to 41 (TGSSTTSGSGQSTQRG) shows a compositional bias: low complexity. Over residues 61 to 72 (GSQGNSGDQGTE) the composition is skewed to polar residues.

Belongs to the adhesin P1 family.

This is an uncharacterized protein from Mycoplasma pneumoniae (strain ATCC 29342 / M129 / Subtype 1) (Mycoplasmoides pneumoniae).